The following is a 306-amino-acid chain: MKHFLTLRDFSKEEILSLVNHASELKKEPKKLLQDKTLAMIFEKNSTRTRMAFELAITELGGKALFLSSNDLQLSRGEPVKDTARVIGAMVDFVMMRVNKHETLLEFARYSKAPVINALSELYHPTQVLGDLLTIKEWNKMQNGIAKVAFIGDSNNMCNSWLIAAAILGFEFSIAIPKNYKISPEIWEFAMKQALISGAKISLSHDRFEALKDKDVVITDTWVSMGEENEKERKIKEFEGFMIDEKAMSVANKDAILLHCLPAYRGYEVSEEIFEKHADVIFEEARNRLYVVKALLCFLDNQRGRE.

Carbamoyl phosphate is bound by residues 46–49 (STRT), Gln73, Arg97, and 124–127 (HPTQ). Residues Asn156, Asp220, and 224 to 225 (SM) contribute to the L-ornithine site. Residues 260–261 (CL) and Arg288 contribute to the carbamoyl phosphate site.

It belongs to the aspartate/ornithine carbamoyltransferase superfamily. OTCase family.

It is found in the cytoplasm. The catalysed reaction is carbamoyl phosphate + L-ornithine = L-citrulline + phosphate + H(+). Its pathway is amino-acid biosynthesis; L-arginine biosynthesis; L-arginine from L-ornithine and carbamoyl phosphate: step 1/3. Functionally, reversibly catalyzes the transfer of the carbamoyl group from carbamoyl phosphate (CP) to the N(epsilon) atom of ornithine (ORN) to produce L-citrulline. In Campylobacter jejuni (strain RM1221), this protein is Ornithine carbamoyltransferase.